We begin with the raw amino-acid sequence, 352 residues long: DNA-directed RNA polymerase subunit alpha (352 aa).

The segment at 1-236 is alpha N-terminal domain (alpha-NTD); the sequence is MTVNIRNWQE…DQLQVFVHFE (236 aa). The segment at 257–352 is alpha C-terminal domain (alpha-CTD); it reads SDVNQLNRFL…AKKLEQELLG (96 aa).

This sequence belongs to the RNA polymerase alpha chain family. As to quaternary structure, homodimer. The RNAP catalytic core consists of 2 alpha, 1 beta, 1 beta' and 1 omega subunit. When a sigma factor is associated with the core the holoenzyme is formed, which can initiate transcription.

The catalysed reaction is RNA(n) + a ribonucleoside 5'-triphosphate = RNA(n+1) + diphosphate. Functionally, DNA-dependent RNA polymerase catalyzes the transcription of DNA into RNA using the four ribonucleoside triphosphates as substrates. This is DNA-directed RNA polymerase subunit alpha from Sphingopyxis alaskensis (strain DSM 13593 / LMG 18877 / RB2256) (Sphingomonas alaskensis).